Reading from the N-terminus, the 86-residue chain is UPF0512 protein V (86 aa).

It belongs to the UPF0512 family.

The chain is UPF0512 protein V from Dictyostelium discoideum (Social amoeba).